A 767-amino-acid polypeptide reads, in one-letter code: Probable beta-D-xylosidase 7 (767 aa).

The signal sequence occupies residues 1–19 (MAKQLLLLLLLFIVHGVES). N-linked (GlcNAc...) asparagine glycosylation is present at Asn100. Asp292 is an active-site residue. N-linked (GlcNAc...) asparagine glycosylation occurs at Asn643.

It belongs to the glycosyl hydrolase 3 family.

The protein resides in the secreted. The protein localises to the extracellular space. It localises to the extracellular matrix. This Arabidopsis thaliana (Mouse-ear cress) protein is Probable beta-D-xylosidase 7 (BXL7).